A 493-amino-acid chain; its full sequence is Polyamine aminopropyltransferase 2 (493 aa).

7 helical membrane-spanning segments follow: residues 9 to 29, 32 to 52, 68 to 88, 101 to 121, 137 to 157, 161 to 181, and 188 to 208; these read LCIFFTGFAGIVAEYSLATLA, LLGNAVLQWSVVISIFLLSMG, LAFVLAELFLSLLVPFSVPIA, VIYGLSFVIGSLIGLEIPLAV, VLEKDYLGSVPAGLLYAYLFL, GLPLTAILAGFFNLISAFLLV, and KFLKFLAIFTFFLLATYAVGH. The tract at residues 187–448 is spermidine synthase; that stretch reads KKFLKFLAIF…PLNFENFELK (262 aa). The PABS domain maps to 202–437; that stretch reads ATYAVGHKRI…GEWGMVIGSK (236 aa). Q233 is an S-methyl-5'-thioadenosine binding site. Spermidine is bound by residues H263 and D287. S-methyl-5'-thioadenosine is bound by residues D306 and 340–341; that span reads DA. Residue D358 is the Proton acceptor of the active site.

It belongs to the spermidine/spermine synthase family. Homodimer or homotetramer.

The protein resides in the cell membrane. It catalyses the reaction S-adenosyl 3-(methylsulfanyl)propylamine + putrescine = S-methyl-5'-thioadenosine + spermidine + H(+). It participates in amine and polyamine biosynthesis; spermidine biosynthesis; spermidine from putrescine: step 1/1. In terms of biological role, catalyzes the irreversible transfer of a propylamine group from the amino donor S-adenosylmethioninamine (decarboxy-AdoMet) to putrescine (1,4-diaminobutane) to yield spermidine. This Aquifex aeolicus (strain VF5) protein is Polyamine aminopropyltransferase 2.